The chain runs to 246 residues: UDP-N-acetyl-D-mannosaminuronic acid transferase (246 aa).

This sequence belongs to the glycosyltransferase 26 family.

The catalysed reaction is UDP-N-acetyl-alpha-D-mannosaminouronate + N-acetyl-alpha-D-glucosaminyl-di-trans,octa-cis-undecaprenyl diphosphate = beta-D-ManNAcA-(1-&gt;4)-alpha-D-GlcNAc-di-trans,octa-cis-undecaprenyl diphosphate + UDP + H(+). The protein operates within bacterial outer membrane biogenesis; enterobacterial common antigen biosynthesis. In terms of biological role, catalyzes the synthesis of Und-PP-GlcNAc-ManNAcA (Lipid II), the second lipid-linked intermediate involved in enterobacterial common antigen (ECA) synthesis. This Serratia proteamaculans (strain 568) protein is UDP-N-acetyl-D-mannosaminuronic acid transferase.